A 285-amino-acid polypeptide reads, in one-letter code: Probable endonuclease 4 (285 aa).

9 residues coordinate Zn(2+): His69, His109, Glu145, Asp179, His182, His216, Asp229, His231, and Glu261.

The protein belongs to the AP endonuclease 2 family. Zn(2+) is required as a cofactor.

It carries out the reaction Endonucleolytic cleavage to 5'-phosphooligonucleotide end-products.. Endonuclease IV plays a role in DNA repair. It cleaves phosphodiester bonds at apurinic or apyrimidinic (AP) sites, generating a 3'-hydroxyl group and a 5'-terminal sugar phosphate. The chain is Probable endonuclease 4 from Salmonella newport (strain SL254).